A 568-amino-acid polypeptide reads, in one-letter code: Hexose transporter 1 (568 aa).

Residues 1 to 32 (MATEEMREKSLKREAESLWDIPPESYASKACS) lie on the Cytoplasmic side of the membrane. The helical transmembrane segment at 33 to 53 (CMGTAAQLVMVAVLGSFQFGF) threads the bilayer. Residues 54 to 86 (NLSALNTSKAFIILDFGWCKDENGGHYSDCDTG) lie on the Extracellular side of the membrane. Cysteines 72 and 83 form a disulfide. Residues 87–107 (LVYGSLINTAVFLGACVGCLL) traverse the membrane as a helical segment. The Cytoplasmic portion of the chain corresponds to 108-119 (GGRLTDFGRRAS). A helical membrane pass occupies residues 120–140 (LIFTHCVCTLGCILSAAAEGF). Residues 141 to 142 (PT) are Extracellular-facing. A helical membrane pass occupies residues 143–163 (LLIARLVVGVAVGMFTVCVPM). At 164 to 182 (YLSEVTPDDRRGYFGTFHQ) the chain is on the cytoplasmic side. Alpha-D-glucose is bound at residue glutamine 182. Beta-D-glucose is bound at residue glutamine 182. Residues 183-203 (LFITLGIFFGTLLGLAFGNAP) traverse the membrane as a helical segment. The Extracellular segment spans residues 204-220 (AGDEVYEVSTFQQAWWR). The chain crosses the membrane as a helical span at residues 221-241 (VMLGLPAVVSLLAIWLLWFVF). At 242 to 306 (PFETPQYMVE…KAIVHPTYRS (65 aa)) the chain is on the cytoplasmic side. Residues 307-327 (VILLACLLSIMQQFTGINVLV) traverse the membrane as a helical segment. Residues glutamine 318, glutamine 319, and asparagine 324 each coordinate alpha-D-glucose. Glutamine 318 provides a ligand contact to beta-D-glucose. Asparagine 324 serves as a coordination point for beta-D-glucose. Residues 328–345 (ANSNNLYSSLKLPQDAVT) lie on the Extracellular side of the membrane. Residues 346–366 (GLTVGFTALNVFLTVITIPLV) traverse the membrane as a helical segment. A beta-D-glucose-binding site is contributed by asparagine 355. Residues 367 to 374 (DRLGRRTL) are Cytoplasmic-facing. Residues 375–395 (LLFSEAVMFVAMGIAFVANLV) traverse the membrane as a helical segment. Topologically, residues 396 to 406 (DQSNTAVQWVT) are extracellular. The chain crosses the membrane as a helical span at residues 407 to 427 (VACVYVFIVGFAVGYGPVLWI). Position 426 (tryptophan 426) interacts with alpha-D-glucose. At 428-443 (YIHEIFPPEIKQGAAS) the chain is on the cytoplasmic side. Residues 444-464 (LASALNWVATVAIVLPSDFLL) form a helical membrane-spanning segment. At 465–469 (KQGFS) the chain is on the extracellular side. Residues 470-490 (VFVGICTVALAIIFVVTFIFV) form a helical membrane-spanning segment. Topologically, residues 491-568 (KETKGLSIEE…DDLTKGTEVV (78 aa)) are cytoplasmic.

This sequence belongs to the major facilitator superfamily. Sugar transporter (TC 2.A.1.1) family. As to quaternary structure, homodimer.

The protein localises to the cell membrane. The catalysed reaction is D-glucose(out) = D-glucose(in). The enzyme catalyses D-fructose(out) = D-fructose(in). It catalyses the reaction D-galactose(in) = D-galactose(out). It carries out the reaction D-mannose(out) = D-mannose(in). The catalysed reaction is D-glucosamine(out) = D-glucosamine(in). The enzyme catalyses D-xylose(out) = D-xylose(in). Its activity is regulated as follows. Inhibited by cytochalasin B. Sodium-independent facilitative hexose transporter. Can transport D-glucose and D-mannose with high affinity, and D-fructose and D-galactose with low affinity. Can transport D-xylose and D-glucosamine. The protein is Hexose transporter 1 of Toxoplasma gondii.